Reading from the N-terminus, the 163-residue chain is Putative defense protein 3 (163 aa).

The first 18 residues, 1–18 (MMFAYIVAVVSALALTSA), serve as a signal peptide directing secretion. The Reelin domain occupies 19-163 (YPTGAPSSTC…SAPVTVLSHK (145 aa)). Cysteine 28 and cysteine 103 are joined by a disulfide.

It belongs to the insect defense protein family.

The protein localises to the secreted. Its function is as follows. May have antimicrobial activity. In Antheraea mylitta (Tasar silkworm), this protein is Putative defense protein 3.